The following is a 1106-amino-acid chain: Communication mutant protein F (1106 aa).

An N-terminal signal peptide occupies residues 1 to 28; it reads MKIYKKNHFLKILIIFIYLSCNILKVNA. In terms of domain architecture, G8 spans 254-380; it reads TIWPNGVVPS…YHNTWSKLAS (127 aa). N-linked (GlcNAc...) asparagine glycosylation is found at asparagine 267, asparagine 306, asparagine 512, asparagine 536, asparagine 677, asparagine 715, and asparagine 833.

It belongs to the comF family.

The protein localises to the secreted. This is Communication mutant protein F (comF-1) from Dictyostelium discoideum (Social amoeba).